Here is a 137-residue protein sequence, read N- to C-terminus: Large ribosomal subunit protein uL13 (137 aa).

The residue at position 55 (arginine 55) is a Citrulline. At serine 73 the chain carries Phosphoserine. Arginine 136 is subject to Citrulline.

It belongs to the universal ribosomal protein uL13 family. As to quaternary structure, component of the 60S ribosome. Component of the GAIT complex. Interacts with EIF4G1. Post-translationally, phosphorylation at Ser-73 upon interferon-gamma treatment in macrophages involves a DAPK1-DAPK3 kinase cascade and is causing release from the ribosome, association with the GAIT complex and subsequent involvement in transcript-selective translation inhibition. Citrullinated by PADI4.

The protein localises to the cytoplasm. Associated with ribosomes but is not required for canonical ribosome function and has extra-ribosomal functions. Component of the GAIT (gamma interferon-activated inhibitor of translation) complex which mediates interferon-gamma-induced transcript-selective translation inhibition in inflammation processes. Upon interferon-gamma activation and subsequent phosphorylation dissociates from the ribosome and assembles into the GAIT complex which binds to stem loop-containing GAIT elements in the 3'-UTR of diverse inflammatory mRNAs (such as ceruplasmin) and suppresses their translation. In the GAIT complex interacts with m7G cap-bound eIF4G at or near the eIF3-binding site and blocks the recruitment of the 43S ribosomal complex. Involved in methylation of rRNA. The chain is Large ribosomal subunit protein uL13 (RPL13A) from Sus scrofa (Pig).